The following is a 352-amino-acid chain: MSILAEKLSSILKRYDELTALLSSAEVVSDIKKLTELSKEQSSIEEISIASKEYLSVLENIKENKELLEDKELSELAKEELKILEIQKSDLETAIKQLLIPKDPNDDKNIYLELRAGTGGDEAGIFVGDLFKAYCRYADLKKWKVEIVSSSENSVGGYKEIIALIKGKGVYSRLKFEAGTHRVQRVPETESQGRIHTSAITVAIMPEVDDVEVSINPSDLKIEVFRAGGHGGQCVNTTDSAVRITHLPTNISVSMQDEKSQHKNKDKALKILKARLYEKQIEEQQLANAKDRKEQVGSGDRSERIRTYNYPQNRLSEHRINLTLYSLEEIMLSGNLDEVINPLIAHAQSQFE.

Q233 is subject to N5-methylglutamine. Positions 288–309 (NAKDRKEQVGSGDRSERIRTYN) are disordered. Positions 289–306 (AKDRKEQVGSGDRSERIR) are enriched in basic and acidic residues.

Belongs to the prokaryotic/mitochondrial release factor family. Post-translationally, methylated by PrmC. Methylation increases the termination efficiency of RF1.

Its subcellular location is the cytoplasm. Functionally, peptide chain release factor 1 directs the termination of translation in response to the peptide chain termination codons UAG and UAA. The sequence is that of Peptide chain release factor 1 (prfA) from Helicobacter pylori (strain ATCC 700392 / 26695) (Campylobacter pylori).